Consider the following 238-residue polypeptide: Serine protease SplE (238 aa).

The first 36 residues, Met1 to Ala36, serve as a signal peptide directing secretion. Catalysis depends on charge relay system residues His75, Asp113, and Ser191.

Belongs to the peptidase S1B family.

The protein localises to the secreted. The sequence is that of Serine protease SplE (splE) from Staphylococcus aureus (strain USA300).